The primary structure comprises 496 residues: Glutamate--tRNA ligase (496 aa).

A 'HIGH' region motif is present at residues 12–22; sequence PSPTGTPHVGL. The 'KMSKS' region signature appears at 256-260; that stretch reads KLSKR. K259 is a binding site for ATP.

It belongs to the class-I aminoacyl-tRNA synthetase family. Glutamate--tRNA ligase type 1 subfamily. Monomer.

The protein resides in the cytoplasm. The enzyme catalyses tRNA(Glu) + L-glutamate + ATP = L-glutamyl-tRNA(Glu) + AMP + diphosphate. Catalyzes the attachment of glutamate to tRNA(Glu) in a two-step reaction: glutamate is first activated by ATP to form Glu-AMP and then transferred to the acceptor end of tRNA(Glu). The sequence is that of Glutamate--tRNA ligase from Mycobacteroides abscessus (strain ATCC 19977 / DSM 44196 / CCUG 20993 / CIP 104536 / JCM 13569 / NCTC 13031 / TMC 1543 / L948) (Mycobacterium abscessus).